Consider the following 132-residue polypeptide: Small ribosomal subunit protein uS8 (132 aa).

The protein belongs to the universal ribosomal protein uS8 family. As to quaternary structure, part of the 30S ribosomal subunit. Contacts proteins S5 and S12.

Its function is as follows. One of the primary rRNA binding proteins, it binds directly to 16S rRNA central domain where it helps coordinate assembly of the platform of the 30S subunit. This is Small ribosomal subunit protein uS8 from Streptococcus gordonii (strain Challis / ATCC 35105 / BCRC 15272 / CH1 / DL1 / V288).